Here is a 516-residue protein sequence, read N- to C-terminus: Gamma-aminobutyrate transaminase 1, mitochondrial (516 aa).

Residues 1–47 (MVIARGLLRSNASSSSSQAINLLKYVTSTGSLQGHTQNLCDASTRHF) constitute a mitochondrion transit peptide. Residue 171-172 (GS) coordinates pyridoxal 5'-phosphate. Tyrosine 204 is a substrate binding site. Aspartate 311 lines the pyridoxal 5'-phosphate pocket. Substrate is bound at residue lysine 340. Position 340 is an N6-(pyridoxal phosphate)lysine (lysine 340).

This sequence belongs to the class-III pyridoxal-phosphate-dependent aminotransferase family. In terms of tissue distribution, expressed in roots, stems and panicles.

It is found in the mitochondrion. It carries out the reaction 4-aminobutanoate + pyruvate = succinate semialdehyde + L-alanine. The enzyme catalyses 4-aminobutanoate + glyoxylate = succinate semialdehyde + glycine. Transaminase that degrades gamma-amino butyric acid (GABA) and uses pyruvate as amino-group acceptor, but not 2-oxoglutarate. Not involved in the interaction with blast fungus. This chain is Gamma-aminobutyrate transaminase 1, mitochondrial (OSL2), found in Oryza sativa subsp. japonica (Rice).